A 1460-amino-acid polypeptide reads, in one-letter code: Nucleoporin NUP159 (1460 aa).

Residues 1–500 are interaction with DBP5; the sequence is MSSLKDEVPT…SEQDATDPAS (500 aa). One copy of the FG 1 repeat lies at 228–231; sequence AVFG. The PXFG 1 repeat unit spans residues 267–270; that stretch reads PPFG. The interval 401-435 is disordered; that stretch reads KSLSPTSEKIPIAGQEQEEKKKNNESSKALSENPF. Phosphoserine is present on S404. Residues 462–470 form an SXFGXPXFG 1 repeat; sequence STFGAPSFG. The segment at 483–504 is disordered; sequence STSTGVASSEQDATDPASAKPV. The interactions with CRM1 and GLE1 stretch occupies residues 497–701; sequence DPASAKPVFG…KPNTSTKPKT (205 aa). An SXFGXPXFG 2; approximate repeat occupies 503-511; sequence PVFGKPAFG. The stretch at 522 to 530 is one SXFGXPXFG 3; approximate repeat; sequence YAFGKPSFG. A PXFG 2 repeat occupies 532–535; that stretch reads PSFG. Residues 533-619 form a disordered region; sequence SFGSGKSSVE…SAFGTASSNE (87 aa). Polar residues-rich tracts occupy residues 536–546, 556–567, 582–593, and 607–619; these read SGKSSVESPAS, GTPSFGSGNSSV, GTPSFGSGNSSA, and FGTS…SSNE. The SXFGXPXFG 4 repeat unit spans residues 548–556; it reads SAFGKPSFG. A PXFG 3 repeat occupies 558 to 561; sequence PSFG. An SXFGXPXFG 5 repeat occupies 574–582; sequence SAFGKPSFG. Residues 584 to 587 form a PXFG 4 repeat; that stretch reads PSFG. Residues 600–608 form an SXFGXPXFG 6 repeat; sequence SAFGKPSFG. An SXFG 1 repeat occupies 610–613; the sequence is SAFG. Residues 624 to 632 form an SXFGXPXFG 7; approximate repeat; that stretch reads SIFGKAAFG. The stretch at 642–645 is one FG 2 repeat; it reads ELFG. The tract at residues 647 to 704 is disordered; that stretch reads NFTISKPTVDSPKEVDSTSPFPSSGDQSEDESKSDVDSSSTPFGTKPNTSTKPKTNAF. S657 carries the phosphoserine modification. Positions 683–704 are enriched in low complexity; that stretch reads DSSSTPFGTKPNTSTKPKTNAF. One copy of the FG 3 repeat lies at 687–690; the sequence is TPFG. An FXFG 1 repeat occupies 704 to 707; the sequence is FDFG. The stretch at 709–712 is one SXFG 2 repeat; sequence SSFG. Residue S724 is modified to Phosphoserine. Polar residues-rich tracts occupy residues 727-750, 757-767, and 778-800; these read TFKF…FSSF, NGSLSKGSTSE, and NGPN…STRL. Residues 727–824 form a disordered region; the sequence is TFKFGTQASP…EAQKSPIGKL (98 aa). The FXFG 2 repeat unit spans residues 728–731; that stretch reads FKFG. S735 and S745 each carry phosphoserine. Residue T803 is modified to Phosphothreonine. Positions 804–814 are enriched in acidic residues; it reads PSDEDGEVVEE. Residues S805 and S819 each carry the phosphoserine modification. A PXFG 5 repeat occupies 842 to 845; it reads PVFG. Positions 861–889 are enriched in polar residues; that stretch reads TNITKPSSTTPAFSFGNSTMNKSNTSTVS. The interval 861 to 1092 is disordered; sequence TNITKPSSTT…DINTDELPHG (232 aa). Residues 873-876 form an FXFG 3 repeat; the sequence is FSFG. At S889 the chain carries Phosphoserine. Residues 917-936 are compositionally biased toward basic and acidic residues; the sequence is AKEERTGESSKKDHNDDPKD. S940 carries the phosphoserine modification. Residues 942-958 are compositionally biased toward polar residues; sequence SEISVRTSESAFDTTAN. Composition is skewed to basic and acidic residues over residues 960-1002, 1017-1027, 1035-1061, and 1068-1092; these read EIPK…KNNE, ALKKDNEKENF, QFED…KESD, and SDRD…LPHG. The interval 1086 to 1175 is interaction with DYN2; sequence TDELPHGGEA…TCNFSVQTFE (90 aa). Residues 1223-1460 are interaction with NUP82; it reads AEFTVLMENI…DFFKNLNMAK (238 aa). 2 coiled-coil regions span residues 1279 to 1320 and 1383 to 1418; these read EQMQ…YLFL and AKLA…GKKA.

Component of the nuclear pore complex (NPC). NPC constitutes the exclusive means of nucleocytoplasmic transport. NPCs allow the passive diffusion of ions and small molecules and the active, nuclear transport receptor-mediated bidirectional transport of macromolecules such as proteins, RNAs, ribonucleoparticles (RNPs), and ribosomal subunits across the nuclear envelope. Due to its 8-fold rotational symmetry, all subunits are present with 8 copies or multiples thereof. Part of the NUP82 subcomplex, interacts with NUP82 through its C-terminal coiled coil. This subcomplex is the base for interactions with NUP116 and GLE2, with NUP42 and GLE1 and with DYN2. Interacts directly with DYN2. Interacts through its FG repeats with karyopherins, such as heterodimeric mRNA transport factor MEX67/MTR2, CRM1 (XPO1), and PSE1 (GSP1-GDP dependent). Interaction with CRM1 (XPO1) is GSP1-GTP dependent and stimulated by RNA1. NUP159 also interacts with GLE1 and the ATP-dependent RNA helicase DBP5.

The protein localises to the nucleus. The protein resides in the nuclear pore complex. It localises to the nucleus membrane. Functionally, functions as a component of the nuclear pore complex (NPC). NPC components, collectively referred to as nucleoporins (NUPs), can play the role of both NPC structural components and of docking or interaction partners for transiently associated nuclear transport factors. Active directional transport is assured by both, a Phe-Gly (FG) repeat affinity gradient for these transport factors across the NPC and a transport cofactor concentration gradient across the nuclear envelope (GSP1 and GSP2 GTPases associated predominantly with GTP in the nucleus, with GDP in the cytoplasm). NUP159 plays an important role in several nuclear export pathways including poly(A)+ RNA, pre-ribosome, and protein export. The protein is Nucleoporin NUP159 (NUP159) of Saccharomyces cerevisiae (strain ATCC 204508 / S288c) (Baker's yeast).